The following is a 125-amino-acid chain: Small ribosomal subunit protein eS8 (125 aa).

The segment at Met-1–Val-36 is disordered. Residues Ser-7 to Gln-26 are compositionally biased toward basic residues. Residues Leu-27–Val-36 are compositionally biased toward basic and acidic residues.

It belongs to the eukaryotic ribosomal protein eS8 family. As to quaternary structure, part of the 30S ribosomal subunit.

The chain is Small ribosomal subunit protein eS8 from Haloquadratum walsbyi (strain DSM 16790 / HBSQ001).